The sequence spans 812 residues: Eukaryotic translation initiation factor 3 subunit C (812 aa).

The segment at 1 to 110 (MSRFFSSNYE…EESDEEDGKK (110 aa)) is disordered. Acidic residues-rich tracts occupy residues 18 to 30 (SEEDLLSSSEEDL) and 38 to 64 (SELDQESDDSFFNESESESEADVDSDD). Phosphoserine occurs at positions 98, 99, and 103. Residues 608–783 (YHQHINLDLI…TIFVVEKGDE (176 aa)) form the PCI domain.

This sequence belongs to the eIF-3 subunit C family. The eukaryotic translation initiation factor 3 (eIF-3) core complex is composed of TIF32, PRT1, NIP1, TIF34 and TIF35. A subcomplex of TIF32, NIP1 and PRT1 mediates the interaction with eIF-1, TIF5/eIF-5 and HCR1. The factors eIF-1, eIF-2, eIF-3, TIF5/eIF-5 and methionyl-tRNAi form a multifactor complex (MFC) that may bind to the 40S ribosome. TIF32, NIP1 and TIF5/eIF-5 comprise a minimal 40S-ribosome-binding unit. NIP1 interacts with TIF5/eIF-5 and SUI1.

The protein localises to the cytoplasm. In terms of biological role, component of the eukaryotic translation initiation factor 3 (eIF-3) complex, which is involved in protein synthesis of a specialized repertoire of mRNAs and, together with other initiation factors, stimulates binding of mRNA and methionyl-tRNAi to the 40S ribosome. The eIF-3 complex specifically targets and initiates translation of a subset of mRNAs involved in cell proliferation. In Saccharomyces cerevisiae (strain ATCC 204508 / S288c) (Baker's yeast), this protein is Eukaryotic translation initiation factor 3 subunit C.